Consider the following 363-residue polypeptide: 3-isopropylmalate dehydrogenase (363 aa).

79–92 (GPKWEHLPPNDQPE) is a binding site for NAD(+). 4 residues coordinate substrate: Arg100, Arg110, Arg139, and Asp228. Residues Asp228, Asp252, and Asp256 each contribute to the Mg(2+) site. Position 286-298 (286-298 (GSAPDIAGKNIAN)) interacts with NAD(+).

The protein belongs to the isocitrate and isopropylmalate dehydrogenases family. LeuB type 1 subfamily. As to quaternary structure, homodimer. The cofactor is Mg(2+). Mn(2+) serves as cofactor.

It is found in the cytoplasm. The enzyme catalyses (2R,3S)-3-isopropylmalate + NAD(+) = 4-methyl-2-oxopentanoate + CO2 + NADH. It participates in amino-acid biosynthesis; L-leucine biosynthesis; L-leucine from 3-methyl-2-oxobutanoate: step 3/4. In terms of biological role, catalyzes the oxidation of 3-carboxy-2-hydroxy-4-methylpentanoate (3-isopropylmalate) to 3-carboxy-4-methyl-2-oxopentanoate. The product decarboxylates to 4-methyl-2 oxopentanoate. The protein is 3-isopropylmalate dehydrogenase of Vibrio vulnificus (strain YJ016).